The sequence spans 90 residues: Acylphosphatase (90 aa).

Positions 3–89 (ALKIRVEGIV…EGYEDFTIKY (87 aa)) constitute an Acylphosphatase-like domain. Catalysis depends on residues R18 and N36.

This sequence belongs to the acylphosphatase family.

The enzyme catalyses an acyl phosphate + H2O = a carboxylate + phosphate + H(+). The polypeptide is Acylphosphatase (acyP) (Thermotoga maritima (strain ATCC 43589 / DSM 3109 / JCM 10099 / NBRC 100826 / MSB8)).